We begin with the raw amino-acid sequence, 309 residues long: Lipoyl synthase (309 aa).

[4Fe-4S] cluster-binding residues include cysteine 37, cysteine 42, cysteine 48, cysteine 67, cysteine 71, cysteine 74, and serine 281. Positions 53-270 (DGPGTATFML…RVAETEFGFL (218 aa)) constitute a Radical SAM core domain.

The protein belongs to the radical SAM superfamily. Lipoyl synthase family. It depends on [4Fe-4S] cluster as a cofactor.

It localises to the cytoplasm. The catalysed reaction is [[Fe-S] cluster scaffold protein carrying a second [4Fe-4S](2+) cluster] + N(6)-octanoyl-L-lysyl-[protein] + 2 oxidized [2Fe-2S]-[ferredoxin] + 2 S-adenosyl-L-methionine + 4 H(+) = [[Fe-S] cluster scaffold protein] + N(6)-[(R)-dihydrolipoyl]-L-lysyl-[protein] + 4 Fe(3+) + 2 hydrogen sulfide + 2 5'-deoxyadenosine + 2 L-methionine + 2 reduced [2Fe-2S]-[ferredoxin]. Its pathway is protein modification; protein lipoylation via endogenous pathway; protein N(6)-(lipoyl)lysine from octanoyl-[acyl-carrier-protein]: step 2/2. Functionally, catalyzes the radical-mediated insertion of two sulfur atoms into the C-6 and C-8 positions of the octanoyl moiety bound to the lipoyl domains of lipoate-dependent enzymes, thereby converting the octanoylated domains into lipoylated derivatives. In Natronomonas pharaonis (strain ATCC 35678 / DSM 2160 / CIP 103997 / JCM 8858 / NBRC 14720 / NCIMB 2260 / Gabara) (Halobacterium pharaonis), this protein is Lipoyl synthase.